The sequence spans 314 residues: 2,3-dihydroxyphenylpropionate/2,3-dihydroxicinnamic acid 1,2-dioxygenase (314 aa).

The active-site Proton donor is the His-115. The active-site Proton acceptor is the His-179.

Belongs to the LigB/MhpB extradiol dioxygenase family. In terms of assembly, homotetramer. The cofactor is Fe(2+).

The enzyme catalyses 3-(2,3-dihydroxyphenyl)propanoate + O2 = (2Z,4E)-2-hydroxy-6-oxonona-2,4-dienedioate + H(+). It catalyses the reaction (2E)-3-(2,3-dihydroxyphenyl)prop-2-enoate + O2 = (2Z,4E,7E)-2-hydroxy-6-oxonona-2,4,7-trienedioate + H(+). Its pathway is aromatic compound metabolism; 3-phenylpropanoate degradation. Catalyzes the non-heme iron(II)-dependent oxidative cleavage of 2,3-dihydroxyphenylpropionic acid and 2,3-dihydroxicinnamic acid into 2-hydroxy-6-ketononadienedioate and 2-hydroxy-6-ketononatrienedioate, respectively. The polypeptide is 2,3-dihydroxyphenylpropionate/2,3-dihydroxicinnamic acid 1,2-dioxygenase (Escherichia coli O81 (strain ED1a)).